The sequence spans 339 residues: N-acetyl-gamma-glutamyl-phosphate reductase (339 aa).

Cys145 is a catalytic residue.

The protein belongs to the NAGSA dehydrogenase family. Type 1 subfamily.

It is found in the cytoplasm. The catalysed reaction is N-acetyl-L-glutamate 5-semialdehyde + phosphate + NADP(+) = N-acetyl-L-glutamyl 5-phosphate + NADPH + H(+). The protein operates within amino-acid biosynthesis; L-arginine biosynthesis; N(2)-acetyl-L-ornithine from L-glutamate: step 3/4. Functionally, catalyzes the NADPH-dependent reduction of N-acetyl-5-glutamyl phosphate to yield N-acetyl-L-glutamate 5-semialdehyde. The chain is N-acetyl-gamma-glutamyl-phosphate reductase from Kosmotoga olearia (strain ATCC BAA-1733 / DSM 21960 / TBF 19.5.1).